We begin with the raw amino-acid sequence, 242 residues long: 3-dehydroquinate dehydratase (242 aa).

3-dehydroquinate is bound by residues glutamate 39–arginine 41 and arginine 73. Histidine 135 (proton donor/acceptor) is an active-site residue. Residue lysine 162 is the Schiff-base intermediate with substrate of the active site. 3-dehydroquinate contacts are provided by arginine 203 and glutamine 228.

It belongs to the type-I 3-dehydroquinase family. As to quaternary structure, homodimer.

It catalyses the reaction 3-dehydroquinate = 3-dehydroshikimate + H2O. The protein operates within metabolic intermediate biosynthesis; chorismate biosynthesis; chorismate from D-erythrose 4-phosphate and phosphoenolpyruvate: step 3/7. Its function is as follows. Involved in the third step of the chorismate pathway, which leads to the biosynthesis of aromatic amino acids. Catalyzes the cis-dehydration of 3-dehydroquinate (DHQ) and introduces the first double bond of the aromatic ring to yield 3-dehydroshikimate. The polypeptide is 3-dehydroquinate dehydratase (Methanosarcina mazei (strain ATCC BAA-159 / DSM 3647 / Goe1 / Go1 / JCM 11833 / OCM 88) (Methanosarcina frisia)).